A 247-amino-acid polypeptide reads, in one-letter code: DNA repair protein RecO (247 aa).

Belongs to the RecO family.

Involved in DNA repair and RecF pathway recombination. The protein is DNA repair protein RecO of Methylocella silvestris (strain DSM 15510 / CIP 108128 / LMG 27833 / NCIMB 13906 / BL2).